A 481-amino-acid chain; its full sequence is MFIEAIVLALTALILYSVYSVKSFNTTRPTDPPVYPVTVPFLGHIVQFGKNPLEFMQRCKRDLKSGVFTISIGGQRVTIVGDPHEHSRFFSPRNEILSPREVYTIMTPVFGEGVAYAAPYPRMREQLNFLAEELTIAKFQNFVPAIQHEVRKFMAENWKEDEGVINLLEDCGAMIINTACQCLFGEDLRKRLNARHFAQLLSKMESSLIPAAVFMPWLLRLPLPQSARCREARAELQKILGEIIVAREKEEASKDNNTSDLLGGLLKAVYRDGTRMSLHEVCGMIVAAMFAGQHTSTITTSWSMLHLMHPKNKKWLDKLHKEIDEFPAQLNYDNVMDEMPFAERCVRESIRRDPPLLMVMRMVKAEVKVGSYVVPKGDIIACSPLLSHHDEEAFPNPRLWDPERDEKVDGAFIGFGAGVHKCIGQKFALLQVKTILATAFREYDFQLLRDEVPDPDYHTMVVGPTLNQCLVKYTRKKKLPS.

A helical transmembrane segment spans residues 1–21 (MFIEAIVLALTALILYSVYSV). Position 422 (Cys-422) interacts with heme.

This sequence belongs to the cytochrome P450 family. Heme serves as cofactor.

Its subcellular location is the membrane. It catalyses the reaction a 14alpha-methyl steroid + 3 reduced [NADPH--hemoprotein reductase] + 3 O2 = a Delta(14) steroid + formate + 3 oxidized [NADPH--hemoprotein reductase] + 4 H2O + 4 H(+). The protein operates within steroid biosynthesis; zymosterol biosynthesis; zymosterol from lanosterol: step 1/6. Functionally, catalyzes C14-demethylation of lanosterol which is critical for ergosterol biosynthesis. It transforms lanosterol into 4,4'-dimethyl cholesta-8,14,24-triene-3-beta-ol. Favors C4 dimethylated substrates, the substrate preference order is 24-methylenedihydrolanosterol &gt; 24,25-dihydrolanosterol &gt; lanosterol &gt; obtusifoliol &gt; norlanosterol. In Trypanosoma cruzi (strain CL Brener), this protein is Sterol 14-alpha demethylase.